We begin with the raw amino-acid sequence, 116 residues long: Large ribosomal subunit protein uL18 (116 aa).

The protein belongs to the universal ribosomal protein uL18 family. Part of the 50S ribosomal subunit; part of the 5S rRNA/L5/L18/L25 subcomplex. Contacts the 5S and 23S rRNAs.

Functionally, this is one of the proteins that bind and probably mediate the attachment of the 5S RNA into the large ribosomal subunit, where it forms part of the central protuberance. This chain is Large ribosomal subunit protein uL18, found in Acholeplasma laidlawii (strain PG-8A).